The following is a 437-amino-acid chain: Membrane protein NfeD1b (437 aa).

A run of 5 helical transmembrane segments spans residues 2–22 (LQIKGFRAALLGIFLLSLLGV), 231–251 (WLTNPVIVPILLTIAFLGLTV), 253–273 (LFSPGVGLPGTAGLIALLLFF), 288–308 (LLFIAGVILILLEIFLPGGII), and 316–336 (IIASLFLAAGSFTVMAVSLLI).

The protein belongs to the NfeD family.

It is found in the cell membrane. This is Membrane protein NfeD1b from Bacillus subtilis (strain 168).